The sequence spans 234 residues: Sugar fermentation stimulation protein A (234 aa).

The H-T-H motif DNA-binding region spans 201-220 (LLSEAQQRGVEILAYKAELS).

The protein belongs to the SfsA family.

Its function is as follows. Binds to DNA non-specifically. Could be a regulatory factor involved in maltose metabolism. This chain is Sugar fermentation stimulation protein A, found in Escherichia coli (strain SMS-3-5 / SECEC).